A 385-amino-acid chain; its full sequence is Lipoyl synthase, mitochondrial (385 aa).

[4Fe-4S] cluster-binding residues include Cys107, Cys112, Cys118, Cys137, Cys141, Cys144, and Ser352. The region spanning Lys122 to Leu341 is the Radical SAM core domain.

Belongs to the radical SAM superfamily. Lipoyl synthase family. [4Fe-4S] cluster is required as a cofactor.

The protein resides in the mitochondrion. It catalyses the reaction [[Fe-S] cluster scaffold protein carrying a second [4Fe-4S](2+) cluster] + N(6)-octanoyl-L-lysyl-[protein] + 2 oxidized [2Fe-2S]-[ferredoxin] + 2 S-adenosyl-L-methionine + 4 H(+) = [[Fe-S] cluster scaffold protein] + N(6)-[(R)-dihydrolipoyl]-L-lysyl-[protein] + 4 Fe(3+) + 2 hydrogen sulfide + 2 5'-deoxyadenosine + 2 L-methionine + 2 reduced [2Fe-2S]-[ferredoxin]. Its pathway is protein modification; protein lipoylation via endogenous pathway; protein N(6)-(lipoyl)lysine from octanoyl-[acyl-carrier-protein]: step 2/2. Catalyzes the radical-mediated insertion of two sulfur atoms into the C-6 and C-8 positions of the octanoyl moiety bound to the lipoyl domains of lipoate-dependent enzymes, thereby converting the octanoylated domains into lipoylated derivatives. The polypeptide is Lipoyl synthase, mitochondrial (Meyerozyma guilliermondii (strain ATCC 6260 / CBS 566 / DSM 6381 / JCM 1539 / NBRC 10279 / NRRL Y-324) (Yeast)).